The sequence spans 603 residues: Peroxisomal targeting signal receptor (603 aa).

Residue Cys10 forms a Glycyl cysteine thioester (Cys-Gly) (interchain with G-Cter in ubiquitin) linkage. The interval 11–33 (SANSNAIAQFNKHTQQDRSLQRQ) is amphipathic helix 1 (AH1). Lys22 is covalently cross-linked (Glycyl lysine isopeptide (Lys-Gly) (interchain with G-Cter in ubiquitin)). Positions 23-49 (HTQQDRSLQRQAANQQGIVQNGQGFKK) are disordered. Residues 31-45 (QRQAANQQGIVQNGQ) show a composition bias toward polar residues. Residues 58–76 (RQNMDQFMNNGPSQSNFQF) form an amphipathic helix 2 (AH2) region. 3 consecutive short sequence motifs (wxxxF/Y motif) follow at residues 99–103 (WTNEF), 128–132 (WATEF), and 192–196 (WDNQF). Residues 232–248 (FQEVWDSLNSEEVENDF) form an amphipathic helix 4 (AH4) region. Positions 271–275 (WEKDF) match the WxxxF/Y motif 4 motif. 5 TPR repeats span residues 304–338 (ESDPYEIGLQLMENGAKLSEAALAFEAAIQRNEGH), 339–372 (INAWLKLGEVQTQNEKEIAGISALEKCLELHPEN), 449–482 (PDVQMGLGVLFYANEDFDKTIDCFKAALSIKPDD), 484–516 (VLWNRLGASLANSNRSEEAVDAYFKALELKPTF), and 518–550 (RARYNLGVSCINIGCYKEAAEHLLSGLSMHQVE).

The protein belongs to the peroxisomal targeting signal receptor family. Interacts (via WxxxF/Y and LVxEF motifs) with PEX14; promoting translocation through the PEX13-PEX14 docking complex. In terms of processing, monoubiquitinated at Cys-10 by PEX2 during PEX5 passage through the retrotranslocation channel: monoubiquitination acts as a signal for PEX5 extraction and is required for proper export from peroxisomes and recycling. When PEX5 recycling is compromised, polyubiquitinated at Lys-22 by PEX10 during its passage through the retrotranslocation channel, leading to its degradation.

The protein resides in the cytoplasm. It is found in the cytosol. The protein localises to the peroxisome matrix. In terms of biological role, receptor that mediates peroxisomal import of proteins containing a C-terminal PTS1-type tripeptide peroxisomal targeting signal (SKL-type). Binds to cargo proteins containing a PTS1 peroxisomal targeting signal in the cytosol, and translocates them into the peroxisome matrix by passing through the PEX13-PEX14 docking complex along with cargo proteins. PEX5 receptor is then retrotranslocated into the cytosol, leading to release of bound cargo in the peroxisome matrix, and reset for a subsequent peroxisome import cycle. The polypeptide is Peroxisomal targeting signal receptor (PEX5) (Debaryomyces hansenii (strain ATCC 36239 / CBS 767 / BCRC 21394 / JCM 1990 / NBRC 0083 / IGC 2968) (Yeast)).